We begin with the raw amino-acid sequence, 468 residues long: ATP synthase subunit beta (468 aa).

Residue 155–162 participates in ATP binding; it reads GGAGVGKT.

Belongs to the ATPase alpha/beta chains family. F-type ATPases have 2 components, CF(1) - the catalytic core - and CF(0) - the membrane proton channel. CF(1) has five subunits: alpha(3), beta(3), gamma(1), delta(1), epsilon(1). CF(0) has three main subunits: a(1), b(2) and c(9-12). The alpha and beta chains form an alternating ring which encloses part of the gamma chain. CF(1) is attached to CF(0) by a central stalk formed by the gamma and epsilon chains, while a peripheral stalk is formed by the delta and b chains.

The protein resides in the cell membrane. The enzyme catalyses ATP + H2O + 4 H(+)(in) = ADP + phosphate + 5 H(+)(out). Functionally, produces ATP from ADP in the presence of a proton gradient across the membrane. The catalytic sites are hosted primarily by the beta subunits. The sequence is that of ATP synthase subunit beta from Streptococcus thermophilus (strain ATCC BAA-250 / LMG 18311).